The primary structure comprises 404 residues: Calcium/calmodulin-dependent protein kinase cmkB (404 aa).

The Protein kinase domain occupies 18 to 279 (YKTGKTLGAG…AHQALQHPWI (262 aa)). ATP contacts are provided by residues 24 to 32 (LGAGLYSVV) and Lys-47. The active-site Proton acceptor is the Asp-141. Thr-179 is modified (phosphothreonine; by cmkC). An autoinhibitory domain region spans residues 279–322 (INPPYDTTDDLGSGEDLLPNIKKNFNARRTLHKAIDTVRAINKL). The interval 301 to 323 (KNFNARRTLHKAIDTVRAINKLR) is calmodulin-binding. The tract at residues 336 to 404 (VDPKPEHVNG…WSRTAPRSER (69 aa)) is disordered. Composition is skewed to basic and acidic residues over residues 338–370 (PKPEHVNGSEVVEDRTTPRERENEDAMEIDSRS) and 379–389 (QIREQERKVKE).

The protein belongs to the protein kinase superfamily. CAMK Ser/Thr protein kinase family. CaMK subfamily. Post-translationally, phosphorylated by cmkC on Thr-179.

It carries out the reaction L-seryl-[protein] + ATP = O-phospho-L-seryl-[protein] + ADP + H(+). The catalysed reaction is L-threonyl-[protein] + ATP = O-phospho-L-threonyl-[protein] + ADP + H(+). Its activity is regulated as follows. Activated by Ca(2+)/calmodulin. Binding of calmodulin results in conformational change that relieves intrasteric autoinhibition and allows phosphorylation of Thr-179 within the activation loop by cmkC. Its function is as follows. Calcium/calmodulin-dependent protein kinase that operates in the calcium-triggered CaMKK-CaMK1 signaling cascade. Required in G1-phase of the cell cycle for proper timing of the initial nuclear division after germination, but not for subsequent mitoses. Required for the normal temporal regulation of nimX activity. The chain is Calcium/calmodulin-dependent protein kinase cmkB from Emericella nidulans (Aspergillus nidulans).